A 328-amino-acid polypeptide reads, in one-letter code: Gonadotropin-releasing hormone receptor (328 aa).

Topologically, residues 1–38 (MANSASPEQNQNHCSAINSSILLTQGNLPTLTLSGKIR) are extracellular. A glycan (N-linked (GlcNAc...) asparagine) is linked at asparagine 18. The helical transmembrane segment at 39–58 (VTVTFFLFLLSTAFNASFLL) threads the bilayer. Topologically, residues 59 to 77 (KLQKWTQRKEKGKKLSRMK) are cytoplasmic. A helical transmembrane segment spans residues 78–97 (VLLKHLTLANLLETLIVMPL). Residues 98 to 115 (DGMWNITVQWYAGEFLCK) are Extracellular-facing. Asparagine 102 is a glycosylation site (N-linked (GlcNAc...) asparagine). Cysteine 114 and cysteine 196 are oxidised to a cystine. The chain crosses the membrane as a helical span at residues 116 to 137 (VLSYLKLFSMYAPAFMMVVISL). Residues 138–164 (DRSLAITRPLAVKSNSRLGRFMIGLAW) are Cytoplasmic-facing. Residues 165–184 (LLSSIFAGPQLYIFRMIHLA) traverse the membrane as a helical segment. Topologically, residues 185–212 (DSSGQTEGFSQCVTHGSFPQWWHQAFYN) are extracellular. Residues 213 to 232 (FFTFSCLFIIPLLIMLICNA) form a helical membrane-spanning segment. Residues 233–281 (KIMFTLTRVLQQDPHNLQLNQSKNNIPRARLRTLKMTVAFAASFIVCWT) are Cytoplasmic-facing. The helical transmembrane segment at 282 to 300 (PYYVLGIWYWFDPEMVNRV) threads the bilayer. At 301-306 (SDPVNH) the chain is on the extracellular side. A helical membrane pass occupies residues 307 to 326 (FFFLFAFLNPCFDPLIYGYF). The Cytoplasmic segment spans residues 327–328 (SL).

This sequence belongs to the G-protein coupled receptor 1 family. Pituitary gland.

It localises to the cell membrane. In terms of biological role, receptor for gonadotropin releasing hormone (GnRH) that mediates the action of GnRH to stimulate the secretion of the gonadotropic hormones luteinizing hormone (LH) and follicle-stimulating hormone (FSH). This receptor mediates its action by association with G-proteins that activate a phosphatidylinositol-calcium second messenger system. This chain is Gonadotropin-releasing hormone receptor (GNRHR), found in Sus scrofa (Pig).